We begin with the raw amino-acid sequence, 311 residues long: Protein YIPF2 (311 aa).

Ala2 carries the N-acetylalanine modification. Residues 2–120 lie on the Cytoplasmic side of the membrane; the sequence is AAADDLAFHE…LRNRPDLYGP (119 aa). The chain crosses the membrane as a helical span at residues 121-141; it reads FWICATLAFVLAVTGNLTLVL. At 142 to 159 the chain is on the lumenal side; sequence AQRRDPSIHYSPQFHKVT. A helical transmembrane segment spans residues 160-180; the sequence is IAGITIYCYAWLVPLALWGFL. Topologically, residues 181–198 are cytoplasmic; that stretch reads RWRQGTRERMGLYTFLET. A helical membrane pass occupies residues 199-219; the sequence is VCVYGYSLFVFIPTVVLWLIP. The Lumenal portion of the chain corresponds to 220–226; that stretch reads VQWLQWL. Residues 227–247 traverse the membrane as a helical segment; the sequence is FGALALALSAAGLVFTLWPVV. The Cytoplasmic segment spans residues 248–252; it reads REDTR. The helical transmembrane segment at 253–273 threads the bilayer; the sequence is LVAAALLSIVVLLHALLALGC. Over 274–311 the chain is Lumenal; it reads KLYFFQPLPLDHVVPAPQAIPPSPNVLLPSSVQPMTTF.

The protein belongs to the YIP1 family. Interacts with YIPF6; this interaction may stabilize YIPF2. May also form a ternary complex with YIPF1 and YIPF6.

The protein resides in the golgi apparatus. It localises to the cis-Golgi network membrane. The protein localises to the trans-Golgi network membrane. It is found in the late endosome membrane. This is Protein YIPF2 (Yipf2) from Rattus norvegicus (Rat).